The following is a 173-amino-acid chain: Crossover junction endodeoxyribonuclease RuvC (173 aa).

Catalysis depends on residues Asp-8, Glu-67, and Asp-139. The Mg(2+) site is built by Asp-8, Glu-67, and Asp-139.

This sequence belongs to the RuvC family. As to quaternary structure, homodimer which binds Holliday junction (HJ) DNA. The HJ becomes 2-fold symmetrical on binding to RuvC with unstacked arms; it has a different conformation from HJ DNA in complex with RuvA. In the full resolvosome a probable DNA-RuvA(4)-RuvB(12)-RuvC(2) complex forms which resolves the HJ. The cofactor is Mg(2+).

The protein localises to the cytoplasm. The catalysed reaction is Endonucleolytic cleavage at a junction such as a reciprocal single-stranded crossover between two homologous DNA duplexes (Holliday junction).. Its function is as follows. The RuvA-RuvB-RuvC complex processes Holliday junction (HJ) DNA during genetic recombination and DNA repair. Endonuclease that resolves HJ intermediates. Cleaves cruciform DNA by making single-stranded nicks across the HJ at symmetrical positions within the homologous arms, yielding a 5'-phosphate and a 3'-hydroxyl group; requires a central core of homology in the junction. The consensus cleavage sequence is 5'-(A/T)TT(C/G)-3'. Cleavage occurs on the 3'-side of the TT dinucleotide at the point of strand exchange. HJ branch migration catalyzed by RuvA-RuvB allows RuvC to scan DNA until it finds its consensus sequence, where it cleaves and resolves the cruciform DNA. The chain is Crossover junction endodeoxyribonuclease RuvC from Aliivibrio fischeri (strain ATCC 700601 / ES114) (Vibrio fischeri).